A 289-amino-acid chain; its full sequence is Prepilin leader peptidase/N-methyltransferase (289 aa).

The helical transmembrane segment at 13 to 33 threads the bilayer; it reads AFVLCALVLGLLVGSFLNVVI. Positions 72, 75, 97, and 100 each coordinate Zn(2+). The next 5 helical transmembrane spans lie at 128–148, 159–179, 183–203, 228–248, and 256–276; these read FSWQAGAMLLLTWGLLAMSMI, LVLPLLWLGLIINSFGLFASL, LWGAVVGYLALWSVYWLFKLV, VLPLTILLSSVVGAVLGTVML, and GTPIPFGPYLAIAGWVALLWG.

This sequence belongs to the peptidase A24 family. It depends on Zn(2+) as a cofactor.

The protein localises to the cell inner membrane. The enzyme catalyses Typically cleaves a -Gly-|-Phe- bond to release an N-terminal, basic peptide of 5-8 residues from type IV prepilin, and then N-methylates the new N-terminal amino group, the methyl donor being S-adenosyl-L-methionine.. Plays an essential role in type IV pili and type II pseudopili formation by proteolytically removing the leader sequence from substrate proteins and subsequently monomethylating the alpha-amino group of the newly exposed N-terminal phenylalanine. In Stutzerimonas stutzeri (Pseudomonas stutzeri), this protein is Prepilin leader peptidase/N-methyltransferase (pilD).